Here is a 262-residue protein sequence, read N- to C-terminus: Phosphatase SCO2771 (262 aa).

Displays phosphatase activity against p-nitrophenyl phosphate (pNPP) in vitro; however, the physiological substrate is unknown. This is Phosphatase SCO2771 from Streptomyces coelicolor (strain ATCC BAA-471 / A3(2) / M145).